The sequence spans 227 residues: MDRDRTTGWMEVICGSMFSGKTEELIRRLRRARIARQHTRVFKPALDERYSEDEVVSHNENSVTTTPVEAPPQIQELVQEADVVGIDEAQFFDDDLVPTCQALAEDGHRVIVVGLDTDYRAEPFDPMPQLMAVAEHVTKLHAVCVVCGAPANHSQRIVPGEDRVLVGATEAYEPRCRACFEPEPVTVTRPRPHTEALRAVATDDADASTNEADPEAADAASADGTAA.

Residues 15-22 (GSMFSGKT) and 87-90 (DEAQ) contribute to the ATP site. The active-site Proton acceptor is the glutamate 88. Residues cysteine 144, cysteine 147, cysteine 176, and cysteine 179 each contribute to the Zn(2+) site. The segment at 198–227 (RAVATDDADASTNEADPEAADAASADGTAA) is disordered. A compositionally biased stretch (low complexity) spans 217-227 (ADAASADGTAA).

It belongs to the thymidine kinase family. In terms of assembly, homotetramer.

The protein resides in the cytoplasm. The enzyme catalyses thymidine + ATP = dTMP + ADP + H(+). The sequence is that of Thymidine kinase from Salinibacter ruber (strain DSM 13855 / M31).